Consider the following 380-residue polypeptide: uncharacterized protein (380 aa).

The protein belongs to the metallo-dependent hydrolases superfamily.

This is an uncharacterized protein from Methanocaldococcus jannaschii (strain ATCC 43067 / DSM 2661 / JAL-1 / JCM 10045 / NBRC 100440) (Methanococcus jannaschii).